Here is a 538-residue protein sequence, read N- to C-terminus: Small ribosomal subunit protein uS3m (538 aa).

Residues 111–134 (SSEGTEEERNEVRGRGAGKRVESI) form a disordered region. The segment covering 120 to 134 (NEVRGRGAGKRVESI) has biased composition (basic and acidic residues).

It belongs to the universal ribosomal protein uS3 family.

The protein resides in the mitochondrion. This chain is Small ribosomal subunit protein uS3m (RPS3), found in Oryza sativa subsp. japonica (Rice).